A 488-amino-acid chain; its full sequence is Rhamnulokinase (488 aa).

ATP is bound at residue 13 to 17 (ASSGR). The cysteines at positions 68 and 222 are disulfide-linked. Substrate is bound by residues glycine 83 and 236 to 238 (HDT). Aspartate 237 serves as the catalytic Proton acceptor. Threonine 259 is a binding site for ATP. A substrate-binding site is contributed by asparagine 296. Residue glutamine 304 participates in ATP binding. An intrachain disulfide couples cysteine 353 to cysteine 370. Residue glycine 402 participates in ATP binding. Cysteine 413 and cysteine 417 are disulfide-bonded.

The protein belongs to the rhamnulokinase family. Requires Mg(2+) as cofactor.

It carries out the reaction L-rhamnulose + ATP = L-rhamnulose 1-phosphate + ADP + H(+). It participates in carbohydrate degradation; L-rhamnose degradation; glycerone phosphate from L-rhamnose: step 2/3. Involved in the catabolism of L-rhamnose (6-deoxy-L-mannose). Catalyzes the transfer of the gamma-phosphate group from ATP to the 1-hydroxyl group of L-rhamnulose to yield L-rhamnulose 1-phosphate. The protein is Rhamnulokinase of Klebsiella pneumoniae subsp. pneumoniae (strain ATCC 700721 / MGH 78578).